The primary structure comprises 308 residues: Ornithine carbamoyltransferase (308 aa).

Carbamoyl phosphate contacts are provided by residues Ser56 to Thr59, Gln83, Arg107, and His134 to Gln137. L-ornithine-binding positions include Asn165, Asp225, and Ser229–Met230. Residues Cys266–Leu267 and Arg294 each bind carbamoyl phosphate.

Belongs to the aspartate/ornithine carbamoyltransferase superfamily. OTCase family.

The protein localises to the cytoplasm. It catalyses the reaction carbamoyl phosphate + L-ornithine = L-citrulline + phosphate + H(+). The protein operates within amino-acid biosynthesis; L-arginine biosynthesis; L-arginine from L-ornithine and carbamoyl phosphate: step 1/3. In terms of biological role, reversibly catalyzes the transfer of the carbamoyl group from carbamoyl phosphate (CP) to the N(epsilon) atom of ornithine (ORN) to produce L-citrulline. This Paracoccus denitrificans (strain Pd 1222) protein is Ornithine carbamoyltransferase.